A 171-amino-acid chain; its full sequence is Disulfide bond formation protein B (171 aa).

Residues 1–13 (MTFISNLADTRLA) are Cytoplasmic-facing. A helical transmembrane segment spans residues 14–30 (WGLLFLSALVLVAYALF). Topologically, residues 31–48 (SQHAMGLQPCIMCIYQRT) are periplasmic. Cysteine 40 and cysteine 43 are oxidised to a cystine. The helical transmembrane segment at 49–63 (AIFGIMFACVPVLAA) threads the bilayer. Topologically, residues 64–70 (NNMLTRL) are cytoplasmic. Residues 71-88 (FAFTVWGISAIWGGLIAW) form a helical membrane-spanning segment. Residues 89 to 144 (EHYDIQNAANPFFATCEIVPNFPSWLPLHEWLPNLFAATGDCGNIDWVFMDMSMPQ) lie on the Periplasmic side of the membrane. A disulfide bond links cysteine 104 and cysteine 130. A helical membrane pass occupies residues 145–163 (WMMVVFAIYSSIWFVVLAS). Over 164 to 171 (RLIGNRAI) the chain is Cytoplasmic.

Belongs to the DsbB family.

Its subcellular location is the cell inner membrane. Required for disulfide bond formation in some periplasmic proteins. Acts by oxidizing the DsbA protein. The chain is Disulfide bond formation protein B from Pseudoalteromonas atlantica (strain T6c / ATCC BAA-1087).